The primary structure comprises 337 residues: Monoacylglycerol lipase ABHD6 (337 aa).

Residues 1-8 (MDLDVVNM) are Extracellular-facing. A helical; Signal-anchor for type II membrane protein membrane pass occupies residues 9 to 29 (FVIAGGTLAIPILAFVASFLL). The Cytoplasmic portion of the chain corresponds to 30–337 (WPSALIRIYY…HNTDNNKKLD (308 aa)). Positions 72-313 (PSILMLHGFS…CGHSVVMERP (242 aa)) constitute an AB hydrolase-1 domain. A (9Z)-octadecenoate-binding site is contributed by Phe80. Ser148 functions as the Nucleophile in the catalytic mechanism. Residue Met149 participates in (9Z)-octadecenoate binding. Active-site charge relay system residues include Asp278 and His306. His306 contributes to the (9Z)-octadecenoate binding site.

It belongs to the AB hydrolase superfamily.

Its subcellular location is the late endosome membrane. It localises to the lysosome membrane. It is found in the mitochondrion membrane. It catalyses the reaction Hydrolyzes glycerol monoesters of long-chain fatty acids.. The catalysed reaction is 1-octanoylglycerol + H2O = octanoate + glycerol + H(+). The enzyme catalyses 1-decanoylglycerol + H2O = decanoate + glycerol + H(+). It carries out the reaction 1-dodecanoylglycerol + H2O = dodecanoate + glycerol + H(+). It catalyses the reaction 1-tetradecanoylglycerol + H2O = tetradecanoate + glycerol + H(+). The catalysed reaction is 2-hexadecanoylglycerol + H2O = glycerol + hexadecanoate + H(+). The enzyme catalyses 2-(9Z-octadecenoyl)-glycerol + H2O = glycerol + (9Z)-octadecenoate + H(+). It carries out the reaction 1-(9Z-octadecenoyl)-glycerol + H2O = glycerol + (9Z)-octadecenoate + H(+). It catalyses the reaction 2-(9Z,12Z-octadecadienoyl)-glycerol + H2O = (9Z,12Z)-octadecadienoate + glycerol + H(+). The catalysed reaction is 2-(5Z,8Z,11Z,14Z-eicosatetraenoyl)-glycerol + H2O = glycerol + (5Z,8Z,11Z,14Z)-eicosatetraenoate + H(+). The enzyme catalyses 1-(5Z,8Z,11Z,14Z-eicosatetraenoyl)-glycerol + H2O = glycerol + (5Z,8Z,11Z,14Z)-eicosatetraenoate + H(+). It carries out the reaction 1-(9Z,12Z-octadecadienoyl)-glycerol + H2O = (9Z,12Z)-octadecadienoate + glycerol + H(+). It catalyses the reaction 3-(9Z-octadecenoyl)-sn-glycero-1-phospho-(3'-(9Z-octadecenoyl)-1'-sn-glycerol) + H2O = 3-(9Z-octadecenoyl)-sn-glycero-1-phospho-(1'-sn-glycerol) + (9Z)-octadecenoate + H(+). The catalysed reaction is (S,S)-2-(9Z-octadecenoyl)-sn-glycero-1-phospho-(2'-(9Z-octadecenoyl)-1'-sn-glycerol) + H2O = (S,S)-2-(9Z-octadecenoyl)-sn-glycero-1-phospho-(1'-sn-glycerol) + (9Z)-octadecenoate + H(+). The enzyme catalyses (R,R)-2-(9Z-octadecenoyl)-sn-glycero-3-phospho-(2'-(9Z-octadecenoyl)-3'-sn-glycerol) + H2O = (R,R)-2-(9Z-octadecenoyl)-sn-glycero-3-phospho-(3'-sn-glycerol) + (9Z)-octadecenoate + H(+). Its function is as follows. Lipase that preferentially hydrolysis medium-chain saturated monoacylglycerols including 2-arachidonoylglycerol. Through 2-arachidonoylglycerol degradation may regulate endocannabinoid signaling pathways. Also has a lysophosphatidyl lipase activity with a preference for lysophosphatidylglycerol among other lysophospholipids. Also able to degrade bis(monoacylglycero)phosphate (BMP) and constitutes the major enzyme for BMP catabolism. BMP, also known as lysobisphosphatidic acid, is enriched in late endosomes and lysosomes and plays a key role in the formation of intraluminal vesicles and in lipid sorting. This Homo sapiens (Human) protein is Monoacylglycerol lipase ABHD6.